The following is a 395-amino-acid chain: Flap endonuclease 1 (395 aa).

An N-domain region spans residues 1–104 (MGIKHLYQVI…GELAKRFMRK (104 aa)). Residue Asp34 participates in Mg(2+) binding. DNA is bound by residues Arg47 and Arg70. 5 residues coordinate Mg(2+): Asp86, Glu158, Glu160, Asp179, and Asp181. An I-domain region spans residues 122 to 253 (DVEKFSRRTV…NTALKLIRDH (132 aa)). Glu158 lines the DNA pocket. Gly231 and Asp233 together coordinate DNA. Asp233 is a Mg(2+) binding site. Residues 341–349 (QQSRLEGFF) form an interaction with PCNA region. A compositionally biased stretch (basic and acidic residues) spans 357 to 389 (QEKATLKRKHEEKLELQKKKKKEEAKAKKEAKS). The disordered stretch occupies residues 357 to 395 (QEKATLKRKHEEKLELQKKKKKEEAKAKKEAKSKPRGAV).

This sequence belongs to the XPG/RAD2 endonuclease family. FEN1 subfamily. Interacts with PCNA. Three molecules of FEN1 bind to one PCNA trimer with each molecule binding to one PCNA monomer. PCNA stimulates the nuclease activity without altering cleavage specificity. The cofactor is Mg(2+). Phosphorylated. Phosphorylation upon DNA damage induces relocalization to the nuclear plasma.

It localises to the nucleus. The protein resides in the nucleolus. The protein localises to the nucleoplasm. It is found in the mitochondrion. Its function is as follows. Structure-specific nuclease with 5'-flap endonuclease and 5'-3' exonuclease activities involved in DNA replication and repair. During DNA replication, cleaves the 5'-overhanging flap structure that is generated by displacement synthesis when DNA polymerase encounters the 5'-end of a downstream Okazaki fragment. It enters the flap from the 5'-end and then tracks to cleave the flap base, leaving a nick for ligation. Also involved in the long patch base excision repair (LP-BER) pathway, by cleaving within the apurinic/apyrimidinic (AP) site-terminated flap. Acts as a genome stabilization factor that prevents flaps from equilibrating into structures that lead to duplications and deletions. Also possesses 5'-3' exonuclease activity on nicked or gapped double-stranded DNA, and exhibits RNase H activity. Also involved in replication and repair of rDNA and in repairing mitochondrial DNA. This is Flap endonuclease 1 from Ajellomyces dermatitidis (strain ER-3 / ATCC MYA-2586) (Blastomyces dermatitidis).